Here is a 351-residue protein sequence, read N- to C-terminus: DNA polymerase IV (351 aa).

The 182-residue stretch at 4-185 (IIHVDMDCFF…LPLAKIPGVG (182 aa)) folds into the UmuC domain. The Mg(2+) site is built by aspartate 8 and aspartate 103. The active site involves glutamate 104.

The protein belongs to the DNA polymerase type-Y family. As to quaternary structure, monomer. Mg(2+) serves as cofactor.

It is found in the cytoplasm. The catalysed reaction is DNA(n) + a 2'-deoxyribonucleoside 5'-triphosphate = DNA(n+1) + diphosphate. Its function is as follows. Poorly processive, error-prone DNA polymerase involved in untargeted mutagenesis. Copies undamaged DNA at stalled replication forks, which arise in vivo from mismatched or misaligned primer ends. These misaligned primers can be extended by PolIV. Exhibits no 3'-5' exonuclease (proofreading) activity. May be involved in translesional synthesis, in conjunction with the beta clamp from PolIII. This chain is DNA polymerase IV, found in Salmonella arizonae (strain ATCC BAA-731 / CDC346-86 / RSK2980).